Consider the following 430-residue polypeptide: MTIRSSMKNNAELESKSVLANESNIISTFTRRIIKEKSGNYQVLKRSLDGKLIYPEATGISSNRGNKLLQRSEVVTRRDLNNSKPMIEQTVFYNGSEHRLLQTNIVTDSRRKRIKFTPDINVEPVLVGDENDIDGSEKEDENITDEYYGEEDDDDLSKLVNVKEILTPILSLGDIINHKTISRTFSSPILKNLALQIILMIEKEQMSVVRYSQFLEVFLGDHPEPIYESNLNLPSYNHNLTLPEDRGASDEDDINNKNNINEVNSNSLSTEAGHINNGMEEFGEEDPFFALPRLEQSNALLSLLPSSSGSASISTLTAAEQQQLNEEIESARQLSQIALQRNKEFIRNLQKIRKSVIKANRIRGRILNWSREYLGISDDDITIPVALRVVKRGLISATTNKTTNFEEEIENTMEDGVVDDNEPDEEANRA.

A disordered region spans residues 408-430 (EIENTMEDGVVDDNEPDEEANRA).

Belongs to the RXT2 family. As to quaternary structure, component of the RPD3C(L) complex composed of at least ASH1, CTI6, DEP1, PHO23, RPD3, RXT2, RXT3, SAP30, SDS3, SIN3, UME1 and UME6.

The protein localises to the nucleus. Component of the RPD3C(L) histone deacetylase complex (HDAC) responsible for the deacetylation of lysine residues on the N-terminal part of the core histones (H2A, H2B, H3 and H4). Histone deacetylation gives a tag for epigenetic repression and plays an important role in transcriptional regulation, cell cycle progression and developmental events. This chain is Transcriptional regulatory protein RXT2 (RXT2), found in Saccharomyces cerevisiae (strain ATCC 204508 / S288c) (Baker's yeast).